A 273-amino-acid polypeptide reads, in one-letter code: MEESLCNLSVKDLMEAGAHFGHQTRRWNPKMKLYIFEEKNGLYIINLAKTLYQLRKALPQVCKVIKENKPILFVGTKKQAKCVIKEAAIEAGEYFVAERWLGGMLTNMTTIRNSIKTLDKIEKDLTQNSSYLTKKEIALLAKRHQKLLKNLEGIRYLRKTPGLVIVVDPGYEKIAVAEAKKLGIPVLALVDTNCDPTPIDHVIPCNDDSLKSIRLIISAIKDAIVNTKKKLGVEIVSPIKALTSDEEANSSAEENENRQEDLLAKKYDSSEAN.

Residues 244 to 273 form a disordered region; it reads SDEEANSSAEENENRQEDLLAKKYDSSEAN. Residues 255–273 show a composition bias toward basic and acidic residues; that stretch reads NENRQEDLLAKKYDSSEAN.

Belongs to the universal ribosomal protein uS2 family.

This is Small ribosomal subunit protein uS2 from Chlamydia felis (strain Fe/C-56) (Chlamydophila felis).